We begin with the raw amino-acid sequence, 338 residues long: Glyceraldehyde-3-phosphate dehydrogenase (338 aa).

NAD(+) is bound by residues 12–13, Asp34, and Arg79; that span reads RI. Residues 150–152, Thr181, 210–211, and Arg233 each bind D-glyceraldehyde 3-phosphate; these read SCT and TG. The active-site Nucleophile is the Cys151. Asn316 provides a ligand contact to NAD(+).

The protein belongs to the glyceraldehyde-3-phosphate dehydrogenase family. Homotetramer.

It is found in the cytoplasm. The enzyme catalyses D-glyceraldehyde 3-phosphate + phosphate + NAD(+) = (2R)-3-phospho-glyceroyl phosphate + NADH + H(+). It participates in carbohydrate degradation; glycolysis; pyruvate from D-glyceraldehyde 3-phosphate: step 1/5. The polypeptide is Glyceraldehyde-3-phosphate dehydrogenase (GPD) (Yarrowia lipolytica (strain CLIB 122 / E 150) (Yeast)).